An 832-amino-acid polypeptide reads, in one-letter code: Cytosolic carboxypeptidase-like protein 5 (832 aa).

Residues 27–50 form a disordered region; sequence TVPSDGEGVGGAATAPTSGSASSP. The span at 38-50 shows a compositional bias: low complexity; it reads AATAPTSGSASSP. The Peptidase M14 domain maps to 157–571; sequence YPFSYSDCQD…ALAIAALDMA (415 aa). Histidine 252 and glutamate 255 together coordinate Zn(2+). The span at 343-354 shows a compositional bias: low complexity; it reads NSKNPSNQQPSS. Disordered stretches follow at residues 343-362 and 376-402; these read NSKN…PEVP and LHLG…KTDP. The segment covering 384–401 has biased composition (basic and acidic residues); that stretch reads GENHDRWTETEPTEEKTD. Residue histidine 435 coordinates Zn(2+). Catalysis depends on glutamate 517, which acts as the Proton donor/acceptor. Residues 606–752 form a disordered region; sequence STANVGLNKK…ASPTSSRNMG (147 aa). Over residues 621–636 the composition is skewed to polar residues; that stretch reads PPKSNNGLPVSCSENA. Residues 644–654 are compositionally biased toward low complexity; it reads STGTSTGGSSS. Polar residues predominate over residues 655–666; sequence QQNSPQMKNSPS. Over residues 708-752 the composition is skewed to low complexity; that stretch reads QQQQQQQQQQQQQQQQPLNQRSTTSSLAPSPTLASASPTSSRNMG.

This sequence belongs to the peptidase M14 family. The cofactor is Zn(2+).

The protein localises to the cytoplasm. The protein resides in the cytosol. Its subcellular location is the nucleus. It is found in the cytoskeleton. It localises to the spindle. The protein localises to the midbody. The catalysed reaction is gamma-L-glutamyl-L-glutamyl-[protein] + H2O = L-glutamyl-[protein] + L-glutamate. It carries out the reaction (L-glutamyl)(n+1)-gamma-L-glutamyl-L-glutamyl-[protein] + H2O = (L-glutamyl)(n)-gamma-L-glutamyl-L-glutamyl-[protein] + L-glutamate. It catalyses the reaction C-terminal L-alpha-aminoacyl-L-glutamyl-[tubulin] + H2O = C-terminal L-alpha-aminoacyl-[tubulin] + L-glutamate. The enzyme catalyses C-terminal L-alpha-aminoacyl-L-glutamyl-L-glutamyl-[tubulin] + H2O = C-terminal L-alpha-aminoacyl-L-glutamyl-[tubulin] + L-glutamate. Functionally, metallocarboxypeptidase that mediates deglutamylation of tubulin and non-tubulin target proteins. Catalyzes the removal of polyglutamate side chains present on the gamma-carboxyl group of glutamate residues within the C-terminal tail of alpha- and beta-tubulin. Cleaves alpha- and gamma-linked polyglutamate tubulin side-chain, as well as the branching point glutamate. Also catalyzes the removal of alpha-linked glutamate residues from the carboxy-terminus of alpha-tubulin. Mediates deglutamylation of nucleotidyltransferase CGAS, leading to CGAS antiviral defense response activation. The chain is Cytosolic carboxypeptidase-like protein 5 (Agbl5) from Rattus norvegicus (Rat).